A 33-amino-acid polypeptide reads, in one-letter code: Potassium channel toxin alpha-KTx 10.5 (33 aa).

Disulfide bonds link cysteine 4–cysteine 23, cysteine 9–cysteine 28, and cysteine 13–cysteine 30.

In terms of tissue distribution, expressed by the venom gland.

It localises to the secreted. Its function is as follows. Inhibits less than 5% of human voltage-gated potassium (Kv) channel Kv1.3/KCNA3 currents at 100nM concentration and does not block human Kv1.1/KCNA1 and Kv1.2/KCNA2 currents. The sequence is that of Potassium channel toxin alpha-KTx 10.5 from Centruroides bonito (Scorpion).